Reading from the N-terminus, the 414-residue chain is Phospholipid-transporting ATPase accessory subunit LEM3 (414 aa).

The required for localization to the plasma membrane stretch occupies residues 1–50 (MVNFDLGQVGEVFRRKDKGAIVSGDNPEEEEDVDASEFEEDEVKPVRTKN). Over 1–74 (MVNFDLGQVG…AINPVLTPRT (74 aa)) the chain is Cytoplasmic. Positions 20-52 (AIVSGDNPEEEEDVDASEFEEDEVKPVRTKNRR) are disordered. Acidic residues predominate over residues 26–42 (NPEEEEDVDASEFEEDE). Residue S36 is modified to Phosphoserine. The chain crosses the membrane as a helical span at residues 75 to 95 (VLPLYLLIAVVFVIVGGCILA). Residues 96 to 372 (QNSKVDEVTI…HGSHLGGRNP (277 aa)) lie on the Extracellular side of the membrane. 2 cysteine pairs are disulfide-bonded: C110/C159 and C216/C231. An N-linked (GlcNAc...) asparagine glycan is attached at N113. N-linked (GlcNAc...) asparagine glycans are attached at residues N240, N256, N279, N298, and N332. The helical transmembrane segment at 373–393 (FLGIVYLIGGCICAAMALILL) threads the bilayer. Topologically, residues 394 to 414 (TFWLFGGRKIADASSLSWNMK) are cytoplasmic. The interval 400–414 (GRKIADASSLSWNMK) is required for localization to the plasma membrane.

Belongs to the CDC50/LEM3 family. Component of a flippase complex consisting of DNF1 or DNF2 and LEM3. Interacts with DNF1; the interaction is direct and required for their mutual export from the endoplasmic reticulum. Interacts with DNF2; the interaction is direct and required for their mutual export from the endoplasmic reticulum.

Its subcellular location is the cell membrane. Accessory component of a P4-ATPase flippase complex which catalyzes the hydrolysis of ATP coupled to the transport of glucosylceramide, phosphatidylcholine, phosphatidylethanolamine, and small amounts of phosphatidylserine from the lumenal to the cytosolic leaflet of the cell membrane and ensures the maintenance of asymmetric distribution of phospholipids. Contributes to substrate binding and specificity of the P4-ATPase catalytic subunit. In Saccharomyces cerevisiae (strain ATCC 204508 / S288c) (Baker's yeast), this protein is Phospholipid-transporting ATPase accessory subunit LEM3.